The primary structure comprises 157 residues: MGFPKVERLLINYKTLDEFKKFKGCGAQELSMLEELQANIIENDSESPFYGIYYGGSLIARMSLYMKRNGGEPFEITGPYLELYKLEVLPTFQKQGFGQMLVNHAKQMQFPIKTIARIHSSGFWDKLSFNPVSVTDGDFYIWHPETNLNAVTNEESA.

The N-acetyltransferase domain occupies Leu9 to Glu154.

This is an uncharacterized protein from Bacillus cereus (strain G9842).